Consider the following 470-residue polypeptide: Ubiquitin carboxyl-terminal hydrolase calypso (470 aa).

The 231-residue stretch at 11–241 (GWLELESDPG…ITHKLKMLRT (231 aa)) folds into the UCH catalytic domain. The active-site Nucleophile is the C98. The active-site Proton donor is the H177. A coiled-coil region spans residues 260–280 (ESRSQAEIRETVDKIKKEEQE). One can recognise a ULD domain in the interval 392 to 420 (NYDEFICTFLSMLAYQGELGDLVTQHLVT). The tract at residues 422-470 (RKPSLGGVQNSGSRGVVRNYNKKSTTNGSSPKTPSSKRRRGRTKYRKRK) is positively charged C-terminal tail required for binding nucleosomes. Residues 423 to 434 (KPSLGGVQNSGS) are compositionally biased toward polar residues. Positions 423–470 (KPSLGGVQNSGSRGVVRNYNKKSTTNGSSPKTPSSKRRRGRTKYRKRK) are disordered. A compositionally biased stretch (basic residues) spans 456 to 470 (SSKRRRGRTKYRKRK).

It belongs to the peptidase C12 family. BAP1 subfamily. Catalytic component of the polycomb repressive deubiquitinase (PR-DUB) complex, at least composed of caly/calypso, Asx and sba (MBD5/6 homolog). The PR-DUB complex associates with nucleosomes to mediate deubiquitination of histone H2AK118ub1 substrates; the association requires the positively charged C-terminal tail of caly, probably due to direct binding of DNA. Interacts (via ULD domain) with Asx (via DEUBAD domain); the interaction produces a stable heterodimer with a composite binding site for ubiquitin. Homodimerizes (via coiled-coil hinge-region between the UCH and ULD domains) to mediate assembly of 2 copies of the caly-Asx heterodimer into a bisymmetric tetramer; dimerization enhances PR-DUB association with nucleosomes.

The protein resides in the nucleus. It carries out the reaction Thiol-dependent hydrolysis of ester, thioester, amide, peptide and isopeptide bonds formed by the C-terminal Gly of ubiquitin (a 76-residue protein attached to proteins as an intracellular targeting signal).. Its function is as follows. Catalytic component of the polycomb repressive deubiquitinase (PR-DUB) complex, a complex that specifically mediates deubiquitination of histone H2A monoubiquitinated at 'Lys-119' (H2AK118ub1). Mediates bisymmetric organization of the PR-DUB complex and is involved in association with nucleosomes to mediate deubiquitination. Does not deubiquitinate monoubiquitinated histone H2B. Required to maintain the transcriptionally repressive state of homeotic genes throughout development. The PR-DUB complex has weak or no activity toward 'Lys-48'- and 'Lys-63'-linked polyubiquitin chains. Polycomb group (PcG) protein. The polypeptide is Ubiquitin carboxyl-terminal hydrolase calypso (Culex quinquefasciatus (Southern house mosquito)).